The chain runs to 323 residues: Aldo-keto reductase family 1 member C18 (323 aa).

Residues 20-24 (GFGTY) and D50 contribute to the NADP(+) site. The active-site Proton donor is Y55. H117 provides a ligand contact to substrate. NADP(+) is bound by residues 166 to 167 (SN), Q190, 216 to 221 (YGALGT), and 270 to 280 (KSFNEERIREN).

Belongs to the aldo/keto reductase family. As to quaternary structure, monomer.

It localises to the cytoplasm. The enzyme catalyses (17R,20S)-17,20-dihydroxypregn-4-en-3-one + NADP(+) = 17alpha-hydroxyprogesterone + NADPH + H(+). It carries out the reaction (17R,20S)-17,20-dihydroxypregn-4-en-3-one + NAD(+) = 17alpha-hydroxyprogesterone + NADH + H(+). Its function is as follows. Catalyzes the conversion of progesterone into 20-alpha-dihydroprogesterone (20 alpha-OHP). The sequence is that of Aldo-keto reductase family 1 member C18 (Akr1c18) from Mus musculus (Mouse).